The primary structure comprises 453 residues: Carbamoyl phosphate synthase arginine-specific small chain (453 aa).

The transit peptide at 1-13 directs the protein to the mitochondrion; that stretch reads MFSKLAANFAQRA. A Glutamine amidotransferase type-1 domain is found at 233-420; that stretch reads HVALIDCGVK…LENVRAAKSA (188 aa). Residue C309 is the Nucleophile of the active site. Catalysis depends on residues H393 and E395.

It belongs to the CarA family. Heterodimer composed of 2 chains; the small (or glutamine) chain promotes the hydrolysis of glutamine to ammonia, which is used by the large (or ammonia) chain to synthesize carbamoyl phosphate.

It is found in the mitochondrion matrix. The enzyme catalyses hydrogencarbonate + L-glutamine + 2 ATP + H2O = carbamoyl phosphate + L-glutamate + 2 ADP + phosphate + 2 H(+). The catalysed reaction is L-glutamine + H2O = L-glutamate + NH4(+). The protein operates within amino-acid biosynthesis; L-arginine biosynthesis; carbamoyl phosphate from bicarbonate: step 1/1. Functionally, small subunit of the arginine-specific carbamoyl phosphate synthase (CPSase). CPSase catalyzes the formation of carbamoyl phosphate from the ammonia moiety of glutamine, carbonate, and phosphate donated by ATP, the first step of the arginine biosynthetic pathway. The small subunit (glutamine amidotransferase) binds and cleaves glutamine to supply the large subunit with the substrate ammonia. This is Carbamoyl phosphate synthase arginine-specific small chain (cpa1) from Hypocrea virens (Gliocladium virens).